Reading from the N-terminus, the 1001-residue chain is Transcription-repair-coupling factor (1001 aa).

The 160-residue stretch at Asp499 to Leu658 folds into the Helicase ATP-binding domain. ATP is bound at residue Gly512–Thr519. Residues Asp611–His614 carry the DEEH box motif. A Helicase C-terminal domain is found at Leu679–Arg835.

It in the N-terminal section; belongs to the UvrB family. The protein in the C-terminal section; belongs to the helicase family. RecG subfamily.

The protein resides in the cytoplasm. Its function is as follows. Couples transcription and DNA repair by recognizing RNA polymerase (RNAP) stalled at DNA lesions. Mediates ATP-dependent release of RNAP and its truncated transcript from the DNA, and recruitment of nucleotide excision repair machinery to the damaged site. This is Transcription-repair-coupling factor from Helicobacter pylori (strain J99 / ATCC 700824) (Campylobacter pylori J99).